We begin with the raw amino-acid sequence, 59 residues long: Small, acid-soluble spore protein H 2 (59 aa).

This sequence belongs to the SspH family.

The protein resides in the spore core. The sequence is that of Small, acid-soluble spore protein H 2 from Bacillus cytotoxicus (strain DSM 22905 / CIP 110041 / 391-98 / NVH 391-98).